The sequence spans 308 residues: Ribonuclease Z (308 aa).

Zn(2+) is bound by residues histidine 61, histidine 63, aspartate 65, histidine 66, histidine 139, aspartate 210, and histidine 268. Aspartate 65 serves as the catalytic Proton acceptor.

The protein belongs to the RNase Z family. As to quaternary structure, homodimer. It depends on Zn(2+) as a cofactor.

The catalysed reaction is Endonucleolytic cleavage of RNA, removing extra 3' nucleotides from tRNA precursor, generating 3' termini of tRNAs. A 3'-hydroxy group is left at the tRNA terminus and a 5'-phosphoryl group is left at the trailer molecule.. Its function is as follows. Zinc phosphodiesterase, which displays some tRNA 3'-processing endonuclease activity. Probably involved in tRNA maturation, by removing a 3'-trailer from precursor tRNA. This chain is Ribonuclease Z, found in Halobacterium salinarum (strain ATCC 700922 / JCM 11081 / NRC-1) (Halobacterium halobium).